A 455-amino-acid chain; its full sequence is Eukaryotic translation initiation factor 3 subunit E (455 aa).

The PCI domain maps to 256-425; the sequence is TDLFFSPAYI…GTVIMNHPPQ (170 aa).

It belongs to the eIF-3 subunit E family. Component of the eukaryotic translation initiation factor 3 (eIF-3) complex.

The protein resides in the cytoplasm. In terms of biological role, component of the eukaryotic translation initiation factor 3 (eIF-3) complex, which is involved in protein synthesis of a specialized repertoire of mRNAs and, together with other initiation factors, stimulates binding of mRNA and methionyl-tRNAi to the 40S ribosome. The eIF-3 complex specifically targets and initiates translation of a subset of mRNAs involved in cell proliferation. The sequence is that of Eukaryotic translation initiation factor 3 subunit E (int6) from Neosartorya fischeri (strain ATCC 1020 / DSM 3700 / CBS 544.65 / FGSC A1164 / JCM 1740 / NRRL 181 / WB 181) (Aspergillus fischerianus).